A 242-amino-acid chain; its full sequence is Small ribosomal subunit protein uS2 (242 aa).

This sequence belongs to the universal ribosomal protein uS2 family.

The chain is Small ribosomal subunit protein uS2 from Shewanella woodyi (strain ATCC 51908 / MS32).